We begin with the raw amino-acid sequence, 249 residues long: MNNIKITIQYDGTDFYGWQIQPNLRTVQGEIYKAVQKVYGEKITIYGCGRTDAGVHALGQVANFRVPKMLVPINKVHIALNSYLDRDLRIIKAEEMPDSFNARASATFREYLYIVHNSSTSFPFYERYAWFYRKNVIDEKLINEYARYLIGEHNFTSFCSTEDENDSKFRYLERVKAIRKGDTIYFIIRGNAFLHNMVRIIVGTLVEGQKKKKPINFIEDILKSEDRAKAFVTAPAHGLYFRRAFFKDE.

Catalysis depends on D52, which acts as the Nucleophile. Position 111 (Y111) interacts with substrate.

The protein belongs to the tRNA pseudouridine synthase TruA family. Homodimer.

It catalyses the reaction uridine(38/39/40) in tRNA = pseudouridine(38/39/40) in tRNA. Formation of pseudouridine at positions 38, 39 and 40 in the anticodon stem and loop of transfer RNAs. The sequence is that of tRNA pseudouridine synthase A from Brachyspira hyodysenteriae (strain ATCC 49526 / WA1).